A 331-amino-acid polypeptide reads, in one-letter code: Polyprenyl transferase mpaA' (331 aa).

8 helical membrane passes run 27–47 (MPYY…ALKL), 56–76 (IEFI…LCGA), 127–147 (LILD…SIML), 159–179 (VFVY…ITGW), 190–210 (GDII…CVYF), 240–260 (LFLA…ISTI), 264–284 (WLWV…IAQF), and 295–315 (IHWD…VEVG).

Belongs to the UbiA prenyltransferase family. It depends on Mg(2+) as a cofactor.

The protein resides in the golgi apparatus membrane. The catalysed reaction is 5,7-dihydroxy-4-methylphthalide + (2E,6E)-farnesyl diphosphate = 4-farnesyl-3,5-dihydroxy-6-methylphthalide + diphosphate. It functions in the pathway secondary metabolite biosynthesis; terpenoid biosynthesis. Its function is as follows. Polyprenyl transferase; part of the gene cluster that mediates the biosynthesis of mycophenolic acid (MPA), the first isolated antibiotic natural product in the world obtained from a culture of Penicillium brevicompactum in 1893. MpaA' is a Golgi apparatus-associated enzyme that catalyzes the prenylation of 5,7-dihydroxy-4,6-dimethylphthalide (DHMP) to yield farnesyl-DHMP (FDHMP). The first step of the pathway is the synthesis of 5-methylorsellinic acid (5MOA) by the cytosolic polyketide synthase mpaC. 5MOA is then converted to the phthalide compound 5,7-dihydroxy-4,6-dimethylphthalide (DHMP) by the endoplasmic reticulum-bound cytochrome P450 monooxygenase mpaDE. MpaDE first catalyzes hydroxylation of 5-MOA to 4,6-dihydroxy-2-(hydroxymethyl)-3-methylbenzoic acid (DHMB). MpaDE then acts as a lactone synthase that catalyzes the ring closure to convert DHMB into DHMP. The next step is the prenylation of DHMP by the Golgi apparatus-associated prenyltransferase mpaA to yield farnesyl-DHMP (FDHMP). The ER-bound oxygenase mpaB then mediates the oxidative cleavage the C19-C20 double bond in FDHMP to yield FDHMP-3C via a mycophenolic aldehyde intermediate. The O-methyltransferase mpaG catalyzes the methylation of FDHMP-3C to yield MFDHMP-3C. After the cytosolic methylation of FDHMP-3C, MFDHMP-3C enters into peroxisomes probably via free diffusion due to its low molecular weight. Upon a peroxisomal CoA ligation reaction, catalyzed by a beta-oxidation component enzyme acyl-CoA ligase ACL891, MFDHMP-3C-CoA would then be restricted to peroxisomes for the following beta-oxidation pathway steps. The peroxisomal beta-oxidation machinery than converts MFDHMP-3C-CoA into MPA_CoA, via a beta-oxidation chain-shortening process. Finally mpaH acts as a peroxisomal acyl-CoA hydrolase with high substrate specificity toward MPA-CoA to release the final product MPA. This is Polyprenyl transferase mpaA' from Penicillium brevicompactum.